Consider the following 234-residue polypeptide: Purine nucleoside phosphorylase DeoD-type (234 aa).

Histidine 4 is a binding site for a purine D-ribonucleoside. Phosphate is bound by residues glycine 20, arginine 24, arginine 43, and 87–90 (RVGT). A purine D-ribonucleoside contacts are provided by residues glutamate 162, 178–180 (EME), and 202–203 (SD). Catalysis depends on aspartate 203, which acts as the Proton donor.

It belongs to the PNP/UDP phosphorylase family. Homohexamer; trimer of homodimers.

The catalysed reaction is a purine D-ribonucleoside + phosphate = a purine nucleobase + alpha-D-ribose 1-phosphate. It carries out the reaction a purine 2'-deoxy-D-ribonucleoside + phosphate = a purine nucleobase + 2-deoxy-alpha-D-ribose 1-phosphate. Catalyzes the reversible phosphorolytic breakdown of the N-glycosidic bond in the beta-(deoxy)ribonucleoside molecules, with the formation of the corresponding free purine bases and pentose-1-phosphate. The sequence is that of Purine nucleoside phosphorylase DeoD-type from Anoxybacillus flavithermus (strain DSM 21510 / WK1).